Reading from the N-terminus, the 732-residue chain is MCWTAKSFVRWLSSSVKYYPKDNHLQALCLCTKTKLNKCHILDWSRSPCNSAVPPGRILSWRLFSCKEGTKDLCKREKIASVTASELLYKDLLKSEQENWNKISRSYKAMTKRIKEKIEELHNKYTLHLESPRMRFGGNVYFEENGYILCSKADDDKGNVHILFSTEDMGFSGAYIKRIRISPDERYLATSLQSENSEEATCVIMKLGDVPFVEEVIPNVFSFEWATNDVLYYTSQKNLKCQNVFMTTFTNEKYTKLVYTEQDARFFVDIYCTKDRRFLTINSNSKTTSEVWLIDCRHPFKLPVLVQARTKGVIYHVEHRNNELYILTSYGEPAEYKLMKASVASTGMENWQLVYALEEKTKLIDLEMFRDHCIMFLQKAGYLYLNVIAFVSHSVQSIQLPTWACAFELESHPEHASSTCYFQLTSPVHPPRRFAYSFKENNLIEQAAEEVPIIMNCHTTRLLAKSKDETLVPITVFHNVNSKELHRKPLLVHVYGAYGIDLNMSFKEEKLMLIEEGWILAYCHVRGGGELGLRWHKDGCQQNKLKGLHDLKACIMLLHELGFSQPKYTALTAVSAGGVLAGAICNSDPELIRAVVLQAPFVDVLNTMMKTHLPLSIEEQEEWGNPLADEKCMKYIKNYCPYHNIKPQCYPSVFITAYENDQRVPLTGILRYVQKLRKATLDHASRTRKKGNWIPNIILDIQASGSHCDSSWEDSLNEVARHLAFLKKELQV.

Catalysis depends on charge relay system residues Ser575, Asp661, and His707.

The protein belongs to the peptidase S9A family. As to quaternary structure, homodimer.

Its subcellular location is the cytoplasm. It is found in the cytosol. Serine peptidase whose precise substrate specificity remains unclear. Does not cleave peptides after a arginine or lysine residue. Regulates trans-Golgi network morphology and sorting by regulating the membrane binding of the AP-1 complex. May play a role in the regulation of synaptic vesicle exocytosis. This chain is Prolyl endopeptidase-like (PREPL), found in Gallus gallus (Chicken).